We begin with the raw amino-acid sequence, 321 residues long: o-succinylbenzoate synthase (321 aa).

K134 functions as the Proton donor in the catalytic mechanism. Residues D162, E191, and D214 each coordinate Mg(2+). K236 (proton acceptor) is an active-site residue.

This sequence belongs to the mandelate racemase/muconate lactonizing enzyme family. MenC type 1 subfamily. A divalent metal cation serves as cofactor.

It catalyses the reaction (1R,6R)-6-hydroxy-2-succinyl-cyclohexa-2,4-diene-1-carboxylate = 2-succinylbenzoate + H2O. The protein operates within quinol/quinone metabolism; 1,4-dihydroxy-2-naphthoate biosynthesis; 1,4-dihydroxy-2-naphthoate from chorismate: step 4/7. It functions in the pathway quinol/quinone metabolism; menaquinone biosynthesis. Converts 2-succinyl-6-hydroxy-2,4-cyclohexadiene-1-carboxylate (SHCHC) to 2-succinylbenzoate (OSB). The polypeptide is o-succinylbenzoate synthase (Enterobacter sp. (strain 638)).